The sequence spans 501 residues: Pyruvate kinase (501 aa).

Arginine 50 contributes to the substrate binding site. K(+) contacts are provided by asparagine 52, serine 54, aspartate 85, and threonine 86. ATP is bound at residue 52-55 (NFSH). Residues arginine 92 and lysine 178 each coordinate ATP. Glutamate 243 lines the Mg(2+) pocket. 3 residues coordinate substrate: glycine 266, aspartate 267, and threonine 299. Residue aspartate 267 participates in Mg(2+) binding.

Belongs to the pyruvate kinase family. In terms of assembly, homotetramer. Mg(2+) is required as a cofactor. It depends on K(+) as a cofactor.

The catalysed reaction is pyruvate + ATP = phosphoenolpyruvate + ADP + H(+). Its pathway is carbohydrate degradation; glycolysis; pyruvate from D-glyceraldehyde 3-phosphate: step 5/5. The sequence is that of Pyruvate kinase (PYK1) from Naumovozyma castellii (Yeast).